The sequence spans 185 residues: Adenine phosphoribosyltransferase (185 aa).

Belongs to the purine/pyrimidine phosphoribosyltransferase family. As to quaternary structure, homodimer.

It localises to the cytoplasm. The enzyme catalyses AMP + diphosphate = 5-phospho-alpha-D-ribose 1-diphosphate + adenine. It participates in purine metabolism; AMP biosynthesis via salvage pathway; AMP from adenine: step 1/1. Its function is as follows. Catalyzes a salvage reaction resulting in the formation of AMP, that is energically less costly than de novo synthesis. The chain is Adenine phosphoribosyltransferase from Rubrobacter xylanophilus (strain DSM 9941 / JCM 11954 / NBRC 16129 / PRD-1).